A 1044-amino-acid polypeptide reads, in one-letter code: Probable pre-mRNA-splicing factor ATP-dependent RNA helicase DEAH6 (1044 aa).

2 disordered regions span residues 99–134 (EADHDEDENNVKKQSASKTGKSDKGQKRFRKKSEQL) and 152–211 (RRKV…VRRD). Positions 157 to 167 (EDEDDGTESEE) are enriched in acidic residues. Residues 168–211 (ERLRDQREREELEQHLRERDTARTRKLTEPKMSKKEQEEFVRRD) are compositionally biased toward basic and acidic residues. Positions 414-577 (LNAVKDHQVL…FDQAPIFRFP (164 aa)) constitute a Helicase ATP-binding domain. ATP is bound at residue 427–434 (GETGSGKT). A DEAH box motif is present at residues 524 to 527 (DEAH). The Helicase C-terminal domain maps to 599–775 (AITTVLTIHV…SVVLSLKSLG (177 aa)).

It belongs to the DEAD box helicase family. DEAH subfamily. PRP2 sub-subfamily. In terms of tissue distribution, predominantly expressed in flowers.

The enzyme catalyses ATP + H2O = ADP + phosphate + H(+). Its function is as follows. May be involved in pre-mRNA splicing. The sequence is that of Probable pre-mRNA-splicing factor ATP-dependent RNA helicase DEAH6 from Arabidopsis thaliana (Mouse-ear cress).